The following is a 354-amino-acid chain: MACCLSEEAKEQKRINQEIEKQLRRDKRDARRELKLLLLGTGESGKSTFIKQMRIIHGSGYSEEDRKGFEKIVYQNIFSAIQTLIAAMETLSLEYKDPSNNEHAEFLNSIDADSADIFEDGHVTAIKGCWTDPGMQECYDRRREYQLTDSAKYYLDDVERIHEPGYIPTLQDILRVRVPTTGIIEYPFDLYSIIFRMVDVGGQRSERRKWIHCFENVTSIMFLVALSEYDQVLVESDNEENRMEESKALFRTIITYPWFQNSSVILFLNKKDLLEEKIMTSHLADYFPDYDGPKCDYEAAREFMMDSYMDLNEDKEKMLYYHYTCATDTENIRFVFAAVKDTILQLNLKEYNLV.

2 S-palmitoyl cysteine lipidation sites follow: Cys3 and Cys4. The 323-residue stretch at 32 to 354 (RELKLLLLGT…QLNLKEYNLV (323 aa)) folds into the G-alpha domain. Positions 35 to 48 (KLLLLGTGESGKST) are G1 motif. GTP contacts are provided by residues 40 to 47 (GTGESGKS), 174 to 180 (LRVRVPT), 199 to 203 (DVGGQ), 269 to 272 (NKKD), and Ala326. 2 residues coordinate Mg(2+): Ser47 and Thr180. A G2 motif region spans residues 172 to 180 (DILRVRVPT). A G3 motif region spans residues 195-204 (FRMVDVGGQR). The interval 265-272 (ILFLNKKD) is G4 motif. A G5 motif region spans residues 324–329 (TCATDT).

Belongs to the G-alpha family. G(q) subfamily. G proteins are composed of 3 units; alpha, beta and gamma. The alpha chain contains the guanine nucleotide binding site. In terms of tissue distribution, a high concentration was found in the retinal light-sensitive outer segment.

Its function is as follows. Guanine nucleotide-binding proteins (G proteins) are involved as modulators or transducers in various transmembrane signaling systems. The G(q) alpha subunit is involved in the light-dependent activation of phospholipase C. The polypeptide is Guanine nucleotide-binding protein G(q) subunit alpha (Loligo forbesii (Veined squid)).